Here is a 116-residue protein sequence, read N- to C-terminus: Non-specific lipid-transfer protein 1 (116 aa).

The signal sequence occupies residues 1 to 25; the sequence is MARAQLVLVALVAALLLAAPHAAVA. 4 disulfides stabilise this stretch: Cys28/Cys75, Cys38/Cys52, Cys53/Cys98, and Cys73/Cys112.

It belongs to the plant LTP family. Aleurone (external part) of the seeds.

Its function is as follows. Plant non-specific lipid-transfer proteins transfer phospholipids as well as galactolipids across membranes. May play a role in wax or cutin deposition in the cell walls of expanding epidermal cells and certain secretory tissues. The protein is Non-specific lipid-transfer protein 1 (LTP) of Oryza sativa subsp. indica (Rice).